Here is a 295-residue protein sequence, read N- to C-terminus: Small ribosomal subunit protein uS2 (295 aa).

The segment at 260–295 is disordered; sequence KQAKKFSKTKNIDEETNTEFEQALNDADENKNSDNA.

The protein belongs to the universal ribosomal protein uS2 family.

The protein is Small ribosomal subunit protein uS2 of Rickettsia felis (strain ATCC VR-1525 / URRWXCal2) (Rickettsia azadi).